We begin with the raw amino-acid sequence, 51 residues long: Cytochrome b559 subunit beta (51 aa).

The chain crosses the membrane as a helical span at residues 26 to 42 (WLAVHALAVPTVFFIGS). Histidine 30 lines the heme pocket.

Belongs to the PsbE/PsbF family. As to quaternary structure, heterodimer of an alpha subunit and a beta subunit. PSII is composed of 1 copy each of membrane proteins PsbA, PsbB, PsbC, PsbD, PsbE, PsbF, PsbH, PsbI, PsbJ, PsbK, PsbL, PsbM, PsbT, PsbY, PsbZ, Psb30/Ycf12, at least 3 peripheral proteins of the oxygen-evolving complex and a large number of cofactors. It forms dimeric complexes. Heme b is required as a cofactor.

It localises to the plastid. The protein localises to the chloroplast thylakoid membrane. Its function is as follows. This b-type cytochrome is tightly associated with the reaction center of photosystem II (PSII). PSII is a light-driven water:plastoquinone oxidoreductase that uses light energy to abstract electrons from H(2)O, generating O(2) and a proton gradient subsequently used for ATP formation. It consists of a core antenna complex that captures photons, and an electron transfer chain that converts photonic excitation into a charge separation. This is Cytochrome b559 subunit beta from Bigelowiella natans (Pedinomonas minutissima).